The sequence spans 431 residues: Sorting nexin-31 (431 aa).

The region spanning 1–107 (MHICIPVTEE…DYFRKLQMDT (107 aa)) is the PX domain.

This sequence belongs to the sorting nexin family.

Its function is as follows. May be involved in protein trafficking. In Xenopus laevis (African clawed frog), this protein is Sorting nexin-31 (snx31).